Consider the following 293-residue polypeptide: MSPPGLVVVDKPAGMTSHDVVGRCRRIFATRRVGHAGTLDPMATGVLVLGVERATKILGLLTAAAKSYSATIRLGQATSTDDAEGDVARSVDARHLTSQAIEAAVGGLRGDIHQVPSTVSAIKVAGKRAYKLVREGQAVELPARPVRIDRFEVRGLRAAGACVDVDVEVDCSSGTYVRALARDLGAALGVGGHLTALRRTRVGRFGLEQAYGLDELAECPRLSYSLDEACLLIFGRRDLSADEAEAAGNGRALAAAGIDGVYAACAPDGRVIALLRDEGARTKSVVVLRPATL.

Residue D40 is the Nucleophile of the active site.

Belongs to the pseudouridine synthase TruB family. Type 1 subfamily.

It carries out the reaction uridine(55) in tRNA = pseudouridine(55) in tRNA. Responsible for synthesis of pseudouridine from uracil-55 in the psi GC loop of transfer RNAs. The chain is tRNA pseudouridine synthase B from Mycolicibacterium paratuberculosis (strain ATCC BAA-968 / K-10) (Mycobacterium paratuberculosis).